Here is an 808-residue protein sequence, read N- to C-terminus: Enhancer of polycomb homolog 2 (808 aa).

Glycyl lysine isopeptide (Lys-Gly) (interchain with G-Cter in SUMO2) cross-links involve residues Lys135, Lys195, and Lys324. Residues 337–357 (YPKKPKAEAGIAPQQPTPETL) are disordered. A Glycyl lysine isopeptide (Lys-Gly) (interchain with G-Cter in SUMO2) cross-link involves residue Lys362. Disordered regions lie at residues 371 to 397 (QSSDEDEFPQVLSPASEAEEENDPDGS), 595 to 630 (QRQQLAQLHQKQQSQHSSQQTHPKAQGSSTSDCMSK), and 645 to 682 (VSAPVPSRSEGSKEQNTGHNNMNGVVQPSGPSKTLYST). The segment covering 595–614 (QRQQLAQLHQKQQSQHSSQQ) has biased composition (low complexity). 2 stretches are compositionally biased toward polar residues: residues 615–630 (THPKAQGSSTSDCMSK) and 658–682 (EQNTGHNNMNGVVQPSGPSKTLYST). Ser755 carries the post-translational modification Phosphoserine.

It belongs to the enhancer of polycomb family.

It is found in the nucleus. Its function is as follows. May play a role in transcription or DNA repair. The protein is Enhancer of polycomb homolog 2 (Epc2) of Mus musculus (Mouse).